Consider the following 483-residue polypeptide: MAASETAPFGVSAASKGGGGVAGARAQHGQLAVAGRVHDALVFAAGAVAAVLVLLATASFLSPMPVTNLVAFRSLPVSVASTSAASAAIDADVGVRGGPGAAGRTFYDDSRVSYAVEVGRRGGITGWDARRAAWMRLRYPRGLNATAAGRERVVMVSGSQAPPCRGEGGDHLLFRFLKNKVDYCRLHGVELLYNNALLQPRMLAYWAKIPAVRAAMLAHPDAEWVWWVDADAVFTDMDFSLPLHKYKDHNLVVYGWNKEVYGERSWVGLNAGVFLIRNCQWSLDFMDAWARMGPASPEYARWGSVLHDTLRGKSDKESDDQSALVYLLSEHEEKWGAKTYLEKGYFFQGYWVEVVDRLDDIAARYEAAERRPSAAAAHLRRRHAEREHERYAAARNAAVRGAVPGPAGGGQSGWRRPFVTHFTGCQPCGGEPNKIYSKKSCADGMNRALNFADDQVLRNYGYRHKDPLSDEVRPLPFDYPAAR.

The Cytoplasmic portion of the chain corresponds to 1-40 (MAASETAPFGVSAASKGGGGVAGARAQHGQLAVAGRVHDA). Residues 41 to 61 (LVFAAGAVAAVLVLLATASFL) traverse the membrane as a helical; Signal-anchor for type II membrane protein segment. Over 62–483 (SPMPVTNLVA…PLPFDYPAAR (422 aa)) the chain is Lumenal. A glycan (N-linked (GlcNAc...) asparagine) is linked at N144.

This sequence belongs to the glycosyltransferase 34 family.

It localises to the golgi apparatus membrane. Probable glycosyltransferase that may be involved in the biosynthesis of xyloglucan. The sequence is that of Probable glycosyltransferase 6 from Oryza sativa subsp. japonica (Rice).